A 125-amino-acid chain; its full sequence is Holo-[acyl-carrier-protein] synthase (125 aa).

The Mg(2+) site is built by Asp-8 and Glu-57.

This sequence belongs to the P-Pant transferase superfamily. AcpS family. It depends on Mg(2+) as a cofactor.

It is found in the cytoplasm. The enzyme catalyses apo-[ACP] + CoA = holo-[ACP] + adenosine 3',5'-bisphosphate + H(+). Its function is as follows. Transfers the 4'-phosphopantetheine moiety from coenzyme A to a Ser of acyl-carrier-protein. The chain is Holo-[acyl-carrier-protein] synthase from Halothermothrix orenii (strain H 168 / OCM 544 / DSM 9562).